Consider the following 186-residue polypeptide: UPF0301 protein Mmc1_0726 (186 aa).

This sequence belongs to the UPF0301 (AlgH) family.

The sequence is that of UPF0301 protein Mmc1_0726 from Magnetococcus marinus (strain ATCC BAA-1437 / JCM 17883 / MC-1).